Reading from the N-terminus, the 37-residue chain is Neuropeptide Y1-like conopeptide (37 aa).

Position 37 is a phenylalanine amide (Phe-37).

The protein belongs to the NPY family. As to expression, expressed by the venom duct.

Its subcellular location is the secreted. Its function is as follows. Causes hyperactivity such as jumping, rapid circling and tail flicking, when intraventricularly injected into mice brain. The chain is Neuropeptide Y1-like conopeptide from Conus betulinus (Beech cone).